The following is a 409-amino-acid chain: Putative integrase/recombinase y4rA (409 aa).

Positions serine 112–arginine 197 constitute a Core-binding (CB) domain. Residues serine 220 to leucine 402 form the Tyr recombinase domain. Residues arginine 260, lysine 284, histidine 354, arginine 357, and histidine 380 contribute to the active site. Tyrosine 389 acts as the O-(3'-phospho-DNA)-tyrosine intermediate in catalysis.

The protein belongs to the 'phage' integrase family.

This is Putative integrase/recombinase y4rA from Sinorhizobium fredii (strain NBRC 101917 / NGR234).